We begin with the raw amino-acid sequence, 217 residues long: Urease accessory protein UreG (217 aa).

13–20 (GPVGSGKT) is a GTP binding site.

The protein belongs to the SIMIBI class G3E GTPase family. UreG subfamily. In terms of assembly, homodimer. UreD, UreF and UreG form a complex that acts as a GTP-hydrolysis-dependent molecular chaperone, activating the urease apoprotein by helping to assemble the nickel containing metallocenter of UreC. The UreE protein probably delivers the nickel.

The protein localises to the cytoplasm. Its function is as follows. Facilitates the functional incorporation of the urease nickel metallocenter. This process requires GTP hydrolysis, probably effectuated by UreG. This is Urease accessory protein UreG from Frankia alni (strain DSM 45986 / CECT 9034 / ACN14a).